The chain runs to 193 residues: Ion-translocating oxidoreductase complex subunit A (193 aa).

A run of 6 helical transmembrane segments spans residues 5–25 (LLLLIGTVLVNNFVLVKFLGL), 39–59 (IGMGLATTFVLTLASVCSYLI), 63–83 (ILAPLGIEYLRTMSFILVIAV), 102–122 (VLGIFLPLITTNCAVLGVALL), 134–154 (IIYGFGAAVGFSLVLILFSAM), and 171–191 (SIAMITAGLMSLAFMGFTGLV).

This sequence belongs to the NqrDE/RnfAE family. The complex is composed of six subunits: RnfA, RnfB, RnfC, RnfD, RnfE and RnfG.

It is found in the cell inner membrane. Part of a membrane-bound complex that couples electron transfer with translocation of ions across the membrane. This chain is Ion-translocating oxidoreductase complex subunit A, found in Aliivibrio salmonicida (strain LFI1238) (Vibrio salmonicida (strain LFI1238)).